A 456-amino-acid chain; its full sequence is Exodeoxyribonuclease 7 large subunit (456 aa).

Belongs to the XseA family. As to quaternary structure, heterooligomer composed of large and small subunits.

It localises to the cytoplasm. It catalyses the reaction Exonucleolytic cleavage in either 5'- to 3'- or 3'- to 5'-direction to yield nucleoside 5'-phosphates.. Bidirectionally degrades single-stranded DNA into large acid-insoluble oligonucleotides, which are then degraded further into small acid-soluble oligonucleotides. The chain is Exodeoxyribonuclease 7 large subunit from Erwinia tasmaniensis (strain DSM 17950 / CFBP 7177 / CIP 109463 / NCPPB 4357 / Et1/99).